Here is a 280-residue protein sequence, read N- to C-terminus: Putative pyruvate, phosphate dikinase regulatory protein (280 aa).

Residue 154 to 161 (GVSRTSKT) participates in ADP binding.

Belongs to the pyruvate, phosphate/water dikinase regulatory protein family. PDRP subfamily.

The catalysed reaction is N(tele)-phospho-L-histidyl/L-threonyl-[pyruvate, phosphate dikinase] + ADP = N(tele)-phospho-L-histidyl/O-phospho-L-threonyl-[pyruvate, phosphate dikinase] + AMP + H(+). It catalyses the reaction N(tele)-phospho-L-histidyl/O-phospho-L-threonyl-[pyruvate, phosphate dikinase] + phosphate + H(+) = N(tele)-phospho-L-histidyl/L-threonyl-[pyruvate, phosphate dikinase] + diphosphate. In terms of biological role, bifunctional serine/threonine kinase and phosphorylase involved in the regulation of the pyruvate, phosphate dikinase (PPDK) by catalyzing its phosphorylation/dephosphorylation. The chain is Putative pyruvate, phosphate dikinase regulatory protein from Nitrobacter winogradskyi (strain ATCC 25391 / DSM 10237 / CIP 104748 / NCIMB 11846 / Nb-255).